The chain runs to 211 residues: Small ribosomal subunit protein uS5 (211 aa).

The 64-residue stretch at 58 to 121 folds into the S5 DRBM domain; it reads FEERIVKLKR…KKAHNSIHTV (64 aa).

Belongs to the universal ribosomal protein uS5 family. As to quaternary structure, part of the 30S ribosomal subunit. Contacts proteins S4 and S8.

With S4 and S12 plays an important role in translational accuracy. Functionally, located at the back of the 30S subunit body where it stabilizes the conformation of the head with respect to the body. In Mycoplasma genitalium (strain ATCC 33530 / DSM 19775 / NCTC 10195 / G37) (Mycoplasmoides genitalium), this protein is Small ribosomal subunit protein uS5.